The chain runs to 944 residues: UvrABC system protein A (944 aa).

Position 31–38 (31–38 (GLSGSGKS)) interacts with ATP. The segment at 253–280 (CPVCGHAISELEPKLFSFNNPAGACPTC) adopts a C4-type zinc-finger fold. ABC transporter domains lie at 309 to 586 (WDRR…PDSL) and 606 to 936 (RNKK…HYLK). ATP is bound at residue 639-646 (GVSGSGKS). Residues 739–765 (CEACQGDGLIKVEMHFLPDIYVPCDVC) form a C4-type zinc finger.

Belongs to the ABC transporter superfamily. UvrA family. In terms of assembly, forms a heterotetramer with UvrB during the search for lesions.

The protein resides in the cytoplasm. Its function is as follows. The UvrABC repair system catalyzes the recognition and processing of DNA lesions. UvrA is an ATPase and a DNA-binding protein. A damage recognition complex composed of 2 UvrA and 2 UvrB subunits scans DNA for abnormalities. When the presence of a lesion has been verified by UvrB, the UvrA molecules dissociate. This Pseudomonas putida (strain ATCC 47054 / DSM 6125 / CFBP 8728 / NCIMB 11950 / KT2440) protein is UvrABC system protein A.